Reading from the N-terminus, the 188-residue chain is Methylated-DNA--protein-cysteine methyltransferase (188 aa).

Residues Y120, G121, and R134 each contribute to the DNA site. C151 functions as the Nucleophile; methyl group acceptor in the catalytic mechanism. Position 157 (S157) interacts with DNA.

Belongs to the MGMT family.

Its subcellular location is the nucleus. It catalyses the reaction a 6-O-methyl-2'-deoxyguanosine in DNA + L-cysteinyl-[protein] = S-methyl-L-cysteinyl-[protein] + a 2'-deoxyguanosine in DNA. The enzyme catalyses a 4-O-methyl-thymidine in DNA + L-cysteinyl-[protein] = a thymidine in DNA + S-methyl-L-cysteinyl-[protein]. In terms of biological role, involved in the cellular defense against the biological effects of O6-methylguanine (O6-MeG) and O4-methylthymine (O4-MeT) in DNA. Repairs the methylated nucleobase in DNA by stoichiometrically transferring the methyl group to a cysteine residue in the enzyme. This is a suicide reaction: the enzyme is irreversibly inactivated. Prefers double-stranded DNA over single-stranded DNA as substrate. This chain is Methylated-DNA--protein-cysteine methyltransferase (MGT1), found in Saccharomyces cerevisiae (strain YJM789) (Baker's yeast).